Reading from the N-terminus, the 391-residue chain is Polyketide synthase 1 (391 aa).

Cysteine 164 is an active-site residue.

This sequence belongs to the thiolase-like superfamily. Chalcone/stilbene synthases family. As to quaternary structure, homodimer. In terms of tissue distribution, expressed in fruits.

The enzyme catalyses (E)-4-coumaroyl-CoA + 3 malonyl-CoA + 3 H(+) = 2',4,4',6'-tetrahydroxychalcone + 3 CO2 + 4 CoA. It participates in secondary metabolite biosynthesis; flavonoid biosynthesis. Polyketide synthase producing naringenin chalcone and slightly p-coumaryltriacetic acid lactone (CTAL). Can use p-coumaryl-CoA as substrate. The polypeptide is Polyketide synthase 1 (PKS1) (Rubus idaeus (Raspberry)).